A 34-amino-acid chain; its full sequence is Conotoxin S4.3 (34 aa).

Pyrrolidone carboxylic acid is present on Q1. E3 is modified (4-carboxyglutamate). S7 carries an O-linked (HexNAc...) serine glycan. An O-linked (HexNAc...) threonine glycan is attached at T9. 4 positions are modified to 4-hydroxyproline: P17, P22, P31, and P32.

The protein belongs to the conotoxin A superfamily. Post-translationally, contains 3 disulfide bonds. As to expression, expressed by the venom duct.

The protein resides in the secreted. Its function is as follows. Probable neurotoxin with ion channel inhibitor activity. In Conus striatus (Striated cone), this protein is Conotoxin S4.3.